We begin with the raw amino-acid sequence, 85 residues long: Large ribosomal subunit protein bL27 (85 aa).

Positions 1–22 (MAHKKAGGSTRNGRDSESKRLG) are disordered.

It belongs to the bacterial ribosomal protein bL27 family.

The protein is Large ribosomal subunit protein bL27 of Aliivibrio fischeri (strain ATCC 700601 / ES114) (Vibrio fischeri).